The primary structure comprises 313 residues: Myeloma-overexpressed gene protein (313 aa).

Positions 107-129 are disordered; sequence ERNKGDKGAQTGAGLSQEAEDVD.

This Homo sapiens (Human) protein is Myeloma-overexpressed gene protein (MYEOV).